A 181-amino-acid chain; its full sequence is Probable nicotinate-nucleotide adenylyltransferase (181 aa).

Belongs to the NadD family.

It catalyses the reaction nicotinate beta-D-ribonucleotide + ATP + H(+) = deamido-NAD(+) + diphosphate. The protein operates within cofactor biosynthesis; NAD(+) biosynthesis; deamido-NAD(+) from nicotinate D-ribonucleotide: step 1/1. Functionally, catalyzes the reversible adenylation of nicotinate mononucleotide (NaMN) to nicotinic acid adenine dinucleotide (NaAD). The polypeptide is Probable nicotinate-nucleotide adenylyltransferase (Campylobacter fetus subsp. fetus (strain 82-40)).